We begin with the raw amino-acid sequence, 514 residues long: Na(+)/H(+) antiporter NhaB (514 aa).

The next 11 helical transmembrane spans lie at 21 to 41 (LAIV…SPFI), 43 to 63 (GWLL…CYPL), 88 to 108 (IMAN…IFFM), 143 to 163 (FLDA…FYGV), 203 to 223 (LMMH…VGEP), 239 to 259 (FFLR…LTCF), 304 to 324 (ALIA…VGLI), 349 to 369 (QESL…AVII), 390 to 410 (LALF…VFVA), 448 to 468 (ATPN…SPLI), and 484 to 504 (IVLS…ATIW).

This sequence belongs to the NhaB Na(+)/H(+) (TC 2.A.34) antiporter family.

The protein resides in the cell inner membrane. The catalysed reaction is 2 Na(+)(in) + 3 H(+)(out) = 2 Na(+)(out) + 3 H(+)(in). Functionally, na(+)/H(+) antiporter that extrudes sodium in exchange for external protons. The polypeptide is Na(+)/H(+) antiporter NhaB (Haemophilus influenzae (strain ATCC 51907 / DSM 11121 / KW20 / Rd)).